We begin with the raw amino-acid sequence, 390 residues long: 1-deoxy-D-xylulose 5-phosphate reductoisomerase (390 aa).

The NADPH site is built by threonine 10, glycine 11, serine 12, isoleucine 13, glycine 36, asparagine 38, and asparagine 124. Lysine 125 contacts 1-deoxy-D-xylulose 5-phosphate. Residue glutamate 126 participates in NADPH binding. Aspartate 150 provides a ligand contact to Mn(2+). 1-deoxy-D-xylulose 5-phosphate is bound by residues serine 151, glutamate 152, serine 176, and histidine 199. Glutamate 152 serves as a coordination point for Mn(2+). Glycine 205 lines the NADPH pocket. 1-deoxy-D-xylulose 5-phosphate-binding residues include serine 212, asparagine 217, lysine 218, and glutamate 221. Residue glutamate 221 participates in Mn(2+) binding.

Belongs to the DXR family. The cofactor is Mg(2+). It depends on Mn(2+) as a cofactor.

It catalyses the reaction 2-C-methyl-D-erythritol 4-phosphate + NADP(+) = 1-deoxy-D-xylulose 5-phosphate + NADPH + H(+). It functions in the pathway isoprenoid biosynthesis; isopentenyl diphosphate biosynthesis via DXP pathway; isopentenyl diphosphate from 1-deoxy-D-xylulose 5-phosphate: step 1/6. Catalyzes the NADPH-dependent rearrangement and reduction of 1-deoxy-D-xylulose-5-phosphate (DXP) to 2-C-methyl-D-erythritol 4-phosphate (MEP). The sequence is that of 1-deoxy-D-xylulose 5-phosphate reductoisomerase from Microcystis aeruginosa (strain NIES-843 / IAM M-2473).